The sequence spans 605 residues: Formin-binding protein 1-like (605 aa).

Positions 1-263 (MSWGTELWDQ…AAKSVDERRD (263 aa)) constitute an F-BAR domain. A coiled-coil region spans residues 66–258 (FTSCIAFFNI…EGMILAAKSV (193 aa)). The interaction with CDC42 stretch occupies residues 245 to 535 (SKCLEGMILA…EFDDEFEDDD (291 aa)). At serine 295 the chain carries Phosphoserine. Residues 325–345 (FGKKPKPQSPPLTPTSLFTSS) are disordered. Positions 392 to 484 (LEDFSHLPPE…VEGKTGVRGD (93 aa)) form a coiled coil. Residues 397 to 474 (HLPPEQRRKK…IHKNEAWLSE (78 aa)) form the REM-1 domain. A compositionally biased stretch (basic and acidic residues) spans 480–490 (GVRGDRRHSSD). The tract at residues 480–539 (GVRGDRRHSSDINHLVTQGRESPEGSYTDDANQEVRGPPQQHGHHSEFDDEFEDDDPLPA) is disordered. Serine 488, serine 501, and serine 505 each carry phosphoserine. Positions 522–605 (GHHSEFDDEF…VTLEKNSKGS (84 aa)) are interaction with DNM1. Acidic residues predominate over residues 527-536 (FDDEFEDDDP). One can recognise an SH3 domain in the interval 538 to 599 (PAIGHCKAIY…PTTYIDVTLE (62 aa)). The segment at 541 to 597 (GHCKAIYPFDGHNEGTLAMKEGEVLYIIEEDKGDGWTRARRQNGEEGYVPTTYIDVT) is interaction with DNM2 and WASL. The interval 541–605 (GHCKAIYPFD…VTLEKNSKGS (65 aa)) is interaction with DAAM1, DIAPH1 and DIAPH2.

This sequence belongs to the FNBP1 family. In terms of assembly, homodimerizes, the dimers can polymerize end-to-end to form filamentous structures. Interacts with GTP-bound CDC42. Interacts with DAAM1, DIAPH1, DIAPH2, DNM1, DNM2 and WASL/N-WASP. Interacts with ATG3. Interacts (via SH3 domain) with ABI1, WASF2, CDC42 and WIPF1. In terms of tissue distribution, isoform 1 is expressed in brain. Isoform 2 is expressed in brain, kidney and lung. Within the brain expression is seen in cortical neurons, hippocampal pyramidal neurons, hypothalamus and piriform cortex.

It localises to the cytoplasm. The protein localises to the cytoskeleton. The protein resides in the cell cortex. Its subcellular location is the cytoplasmic vesicle. It is found in the cell membrane. Its function is as follows. Required to coordinate membrane tubulation with reorganization of the actin cytoskeleton during endocytosis. May bind to lipids such as phosphatidylinositol 4,5-bisphosphate and phosphatidylserine and promote membrane invagination and the formation of tubules. Also promotes CDC42-induced actin polymerization by activating the WASL-WASPIP complex, the predominant form of WASL/N-WASP in cells. Actin polymerization may promote the fission of membrane tubules to form endocytic vesicles. Essential for autophagy of intracellular bacterial pathogens. May negatively regulate neurite extension and axon branching in developing neurons. This chain is Formin-binding protein 1-like (Fnbp1l), found in Rattus norvegicus (Rat).